We begin with the raw amino-acid sequence, 810 residues long: Phospholipase D alpha 1 (810 aa).

Residues 1 to 36 (MAQHLLHGTLHATIYEVDDLHTGGLRSGFFGKILAN) constitute a propeptide that is removed on maturation. Residues 1 to 126 (MAQHLLHGTL…IHGEEVDQWV (126 aa)) enclose the C2 domain. Residue Asp-187 coordinates Ca(2+). The region spanning 327–366 (AMFTHHQKIVVVDSEMPSRGGSQMRRIVSFVGGIDLCDGR) is the PLD phosphodiesterase 1 domain. Residues His-332, Lys-334, and Asp-339 contribute to the active site. Residue His-332 coordinates a 1,2-diacyl-sn-glycero-3-phosphate. Residues His-372 and His-406 each contribute to the Ca(2+) site. A 1,2-diacyl-sn-glycero-3-phosphate is bound by residues Gln-522 and His-661. The region spanning 656 to 683 (FMIYVHTKMMIVDDEYIIIGSANINQRS) is the PLD phosphodiesterase 2 domain. Active-site residues include His-661, Lys-663, and Asp-668. Glu-722 contributes to the Ca(2+) binding site.

The protein belongs to the phospholipase D family. C2-PLD subfamily. Requires Ca(2+) as cofactor.

The protein resides in the cytoplasm. It localises to the membrane. It carries out the reaction a 1,2-diacyl-sn-glycero-3-phosphocholine + H2O = a 1,2-diacyl-sn-glycero-3-phosphate + choline + H(+). Hydrolyzes glycerol-phospholipids at the terminal phosphodiesteric bond. Plays an important role in various cellular processes, including phytohormone action, vesicular trafficking, secretion, cytoskeletal arrangement, meiosis, tumor promotion, pathogenesis, membrane deterioration and senescence. This chain is Phospholipase D alpha 1 (PLD1), found in Brassica oleracea var. capitata (Cabbage).